The primary structure comprises 177 residues: 3-hydroxyanthranilate 3,4-dioxygenase (177 aa).

Residue Arg-47 coordinates O2. Positions 51, 57, and 95 each coordinate Fe cation. Glu-57 is a binding site for substrate. Positions 99 and 110 each coordinate substrate. Cys-125, Cys-128, Cys-162, and Cys-165 together coordinate Fe cation.

This sequence belongs to the 3-HAO family. Homodimer. The cofactor is Fe(2+).

It carries out the reaction 3-hydroxyanthranilate + O2 = (2Z,4Z)-2-amino-3-carboxymuconate 6-semialdehyde. It participates in cofactor biosynthesis; NAD(+) biosynthesis; quinolinate from L-kynurenine: step 3/3. Catalyzes the oxidative ring opening of 3-hydroxyanthranilate to 2-amino-3-carboxymuconate semialdehyde, which spontaneously cyclizes to quinolinate. The protein is 3-hydroxyanthranilate 3,4-dioxygenase of Burkholderia cenocepacia (strain ATCC BAA-245 / DSM 16553 / LMG 16656 / NCTC 13227 / J2315 / CF5610) (Burkholderia cepacia (strain J2315)).